The following is a 313-amino-acid chain: Probable cell division protein WhiA (313 aa).

The segment at residues 275–308 (SLRELGELAQPPLSKSCVNHRLRKLEQIAEHILA) is a DNA-binding region (H-T-H motif).

This sequence belongs to the WhiA family.

Its function is as follows. Involved in cell division and chromosome segregation. The chain is Probable cell division protein WhiA from Desulforudis audaxviator (strain MP104C).